We begin with the raw amino-acid sequence, 124 residues long: Large ribosomal subunit protein eL31 (124 aa).

It belongs to the eukaryotic ribosomal protein eL31 family. As to quaternary structure, component of the large ribosomal subunit.

The protein localises to the cytoplasm. Functionally, component of the large ribosomal subunit. The ribosome is a large ribonucleoprotein complex responsible for the synthesis of proteins in the cell. The protein is Large ribosomal subunit protein eL31 (rpl31) of Paralichthys olivaceus (Bastard halibut).